We begin with the raw amino-acid sequence, 372 residues long: Glutamate 5-kinase (372 aa).

Lys-14 contributes to the ATP binding site. Ser-54, Asp-141, and Asn-153 together coordinate substrate. ATP is bound by residues 173–174 (TD) and 215–221 (SGGMLTK). The region spanning 280-358 (AGKVVVDEGA…HEIEHILGYI (79 aa)) is the PUA domain.

Belongs to the glutamate 5-kinase family.

It localises to the cytoplasm. It catalyses the reaction L-glutamate + ATP = L-glutamyl 5-phosphate + ADP. Its pathway is amino-acid biosynthesis; L-proline biosynthesis; L-glutamate 5-semialdehyde from L-glutamate: step 1/2. Its function is as follows. Catalyzes the transfer of a phosphate group to glutamate to form L-glutamate 5-phosphate. The polypeptide is Glutamate 5-kinase (Methylobacillus flagellatus (strain ATCC 51484 / DSM 6875 / VKM B-1610 / KT)).